A 137-amino-acid chain; its full sequence is Large-conductance mechanosensitive channel (137 aa).

The next 2 membrane-spanning stretches (helical) occupy residues 9–29 (AFAV…GAAF) and 79–99 (IQTI…VKVI).

The protein belongs to the MscL family. As to quaternary structure, homopentamer.

Its subcellular location is the cell inner membrane. Its function is as follows. Channel that opens in response to stretch forces in the membrane lipid bilayer. May participate in the regulation of osmotic pressure changes within the cell. The chain is Large-conductance mechanosensitive channel from Pseudomonas entomophila (strain L48).